A 158-amino-acid chain; its full sequence is Transcriptional repressor NrdR (158 aa).

Residues 3–34 fold into a zinc finger; it reads CPSCQNTDSRVLESRAADAGRSVRRRRECLHC. The region spanning 49–139 is the ATP-cone domain; it reads ITVLKRNGNR…VYRDFRGVND (91 aa).

Belongs to the NrdR family. The cofactor is Zn(2+).

Negatively regulates transcription of bacterial ribonucleotide reductase nrd genes and operons by binding to NrdR-boxes. The sequence is that of Transcriptional repressor NrdR from Prochlorococcus marinus (strain MIT 9313).